Consider the following 324-residue polypeptide: Type II restriction enzyme AplI (324 aa).

The protein belongs to the BsuBI/PstI type II restriction endonuclease family. Requires Mg(2+) as cofactor.

The catalysed reaction is Endonucleolytic cleavage of DNA to give specific double-stranded fragments with terminal 5'-phosphates.. Activated by K(+) and Na(+) ions, whereas NH(4)(+) ions appear to inhibit endonuclease activity. Functionally, a P subtype restriction enzyme that recognizes the double-stranded sequence 5'-CTGCAG-3' and cleaves after A-5. This chain is Type II restriction enzyme AplI (aplIR), found in Arthrospira platensis (strain NIES-39 / UTEX 3086 / IAM M-135) (Spirulina platensis).